Here is a 172-residue protein sequence, read N- to C-terminus: 3-phenylpropionate/cinnamic acid dioxygenase subunit beta (172 aa).

It belongs to the bacterial ring-hydroxylating dioxygenase beta subunit family. As to quaternary structure, this dioxygenase system consists of four proteins: the two subunits of the hydroxylase component (HcaE and HcaF), a ferredoxin (HcaC) and a ferredoxin reductase (HcaD).

The catalysed reaction is 3-phenylpropanoate + NADH + O2 + H(+) = 3-(cis-5,6-dihydroxycyclohexa-1,3-dien-1-yl)propanoate + NAD(+). The enzyme catalyses (E)-cinnamate + NADH + O2 + H(+) = (2E)-3-(cis-5,6-dihydroxycyclohexa-1,3-dien-1-yl)prop-2-enoate + NAD(+). It functions in the pathway aromatic compound metabolism; 3-phenylpropanoate degradation. In terms of biological role, part of the multicomponent 3-phenylpropionate dioxygenase. Converts 3-phenylpropionic acid (PP) and cinnamic acid (CI) into 3-phenylpropionate-dihydrodiol (PP-dihydrodiol) and cinnamic acid-dihydrodiol (CI-dihydrodiol), respectively. The protein is 3-phenylpropionate/cinnamic acid dioxygenase subunit beta of Escherichia coli O17:K52:H18 (strain UMN026 / ExPEC).